The following is a 94-amino-acid chain: Large ribosomal subunit protein uL23 (94 aa).

The protein belongs to the universal ribosomal protein uL23 family. As to quaternary structure, part of the 50S ribosomal subunit. Contacts protein L29, and trigger factor when it is bound to the ribosome.

Functionally, one of the early assembly proteins it binds 23S rRNA. One of the proteins that surrounds the polypeptide exit tunnel on the outside of the ribosome. Forms the main docking site for trigger factor binding to the ribosome. This chain is Large ribosomal subunit protein uL23, found in Pelobacter propionicus (strain DSM 2379 / NBRC 103807 / OttBd1).